Reading from the N-terminus, the 149-residue chain is Small ribosomal subunit protein uS13 (149 aa).

Belongs to the universal ribosomal protein uS13 family. As to quaternary structure, part of the 30S ribosomal subunit. Forms a loose heterodimer with protein S19. Forms two bridges to the 50S subunit in the 70S ribosome.

Located at the top of the head of the 30S subunit, it contacts several helices of the 16S rRNA. In the 70S ribosome it contacts the 23S rRNA (bridge B1a) and protein L5 of the 50S subunit (bridge B1b), connecting the 2 subunits; these bridges are implicated in subunit movement. This is Small ribosomal subunit protein uS13 from Thermococcus kodakarensis (strain ATCC BAA-918 / JCM 12380 / KOD1) (Pyrococcus kodakaraensis (strain KOD1)).